The following is a 153-amino-acid chain: Nucleoside diphosphate kinase (153 aa).

Ala2 is modified (N-acetylalanine). The ATP site is built by Lys13, Phe61, Arg89, Thr95, Arg106, and Asn116. The active-site Pros-phosphohistidine intermediate is His119. Residue Ser126 is modified to Phosphoserine.

It belongs to the NDK family. Homohexamer. Mg(2+) serves as cofactor.

The protein localises to the cytoplasm. It is found in the cytoskeleton. It carries out the reaction a 2'-deoxyribonucleoside 5'-diphosphate + ATP = a 2'-deoxyribonucleoside 5'-triphosphate + ADP. The catalysed reaction is a ribonucleoside 5'-diphosphate + ATP = a ribonucleoside 5'-triphosphate + ADP. Functionally, major role in the synthesis of nucleoside triphosphates other than ATP. The ATP gamma phosphate is transferred to the NDP beta phosphate via a ping-pong mechanism, using a phosphorylated active-site intermediate. This is Nucleoside diphosphate kinase (awd) from Drosophila melanogaster (Fruit fly).